Here is a 131-residue protein sequence, read N- to C-terminus: Large ribosomal subunit protein bL12 (131 aa).

It belongs to the bacterial ribosomal protein bL12 family. As to quaternary structure, homodimer. Part of the ribosomal stalk of the 50S ribosomal subunit. Forms a multimeric L10(L12)X complex, where L10 forms an elongated spine to which 2 to 4 L12 dimers bind in a sequential fashion. Binds GTP-bound translation factors.

Forms part of the ribosomal stalk which helps the ribosome interact with GTP-bound translation factors. Is thus essential for accurate translation. The polypeptide is Large ribosomal subunit protein bL12 (Prochlorococcus marinus (strain NATL2A)).